Here is a 334-residue protein sequence, read N- to C-terminus: Ornithine carbamoyltransferase (334 aa).

Residues serine 57–threonine 60, arginine 108, and histidine 135–glutamine 138 contribute to the carbamoyl phosphate site. L-ornithine is bound by residues asparagine 168, aspartate 232, and serine 236 to methionine 237. Residues cysteine 274–leucine 275 and arginine 321 contribute to the carbamoyl phosphate site.

This sequence belongs to the aspartate/ornithine carbamoyltransferase superfamily. OTCase family.

Its subcellular location is the cytoplasm. The enzyme catalyses carbamoyl phosphate + L-ornithine = L-citrulline + phosphate + H(+). The protein operates within amino-acid biosynthesis; L-arginine biosynthesis; L-arginine from L-ornithine and carbamoyl phosphate: step 1/3. In terms of biological role, reversibly catalyzes the transfer of the carbamoyl group from carbamoyl phosphate (CP) to the N(epsilon) atom of ornithine (ORN) to produce L-citrulline. The protein is Ornithine carbamoyltransferase of Cutibacterium acnes (strain DSM 16379 / KPA171202) (Propionibacterium acnes).